The primary structure comprises 92 residues: UPF0223 protein SSA_0938 (92 aa).

It belongs to the UPF0223 family.

The polypeptide is UPF0223 protein SSA_0938 (Streptococcus sanguinis (strain SK36)).